A 433-amino-acid chain; its full sequence is Homogentisate 1,2-dioxygenase (433 aa).

H288 serves as the catalytic Proton acceptor. Residues H331 and E337 each contribute to the Fe cation site. Residues Y346 and H367 each coordinate homogentisate. Residue H367 coordinates Fe cation.

It belongs to the homogentisate dioxygenase family. Hexamer; dimer of trimers. Fe cation is required as a cofactor.

It carries out the reaction homogentisate + O2 = 4-maleylacetoacetate + H(+). The protein operates within amino-acid degradation; L-phenylalanine degradation; acetoacetate and fumarate from L-phenylalanine: step 4/6. Functionally, involved in the catabolism of homogentisate (2,5-dihydroxyphenylacetate or 2,5-OH-PhAc), a central intermediate in the degradation of phenylalanine and tyrosine. Catalyzes the oxidative ring cleavage of the ar omatic ring of 2,5-dihydroxyphenylacetate to yield maleylacetoacetate. The polypeptide is Homogentisate 1,2-dioxygenase (Pseudomonas putida (strain ATCC 47054 / DSM 6125 / CFBP 8728 / NCIMB 11950 / KT2440)).